Consider the following 176-residue polypeptide: Large ribosomal subunit protein eL20 (176 aa).

A Glycyl lysine isopeptide (Lys-Gly) (interchain with G-Cter in SUMO2) cross-link involves residue lysine 11. Tyrosine 63 carries the post-translational modification Phosphotyrosine. At serine 71 the chain carries Phosphoserine. Lysine 76 carries the N6-succinyllysine modification. Serine 123 is modified (phosphoserine). Residues lysine 128 and lysine 170 each participate in a glycyl lysine isopeptide (Lys-Gly) (interchain with G-Cter in SUMO2) cross-link.

This sequence belongs to the eukaryotic ribosomal protein eL20 family. As to quaternary structure, component of the large ribosomal subunit. Binds IPO9 with high affinity.

It is found in the cytoplasm. Component of the large ribosomal subunit. The ribosome is a large ribonucleoprotein complex responsible for the synthesis of proteins in the cell. In Oryctolagus cuniculus (Rabbit), this protein is Large ribosomal subunit protein eL20 (RPL18A).